Here is a 310-residue protein sequence, read N- to C-terminus: Junctional adhesion molecule C (310 aa).

The first 31 residues, 1–31 (MALRRPPRLRLCARLPDFFLLLLFRGCLIGA), serve as a signal peptide directing secretion. Topologically, residues 32-241 (VNLKSSNRTP…EQEMEVYDLN (210 aa)) are extracellular. An Ig-like V-type domain is found at 35–127 (KSSNRTPVVQ…VARNDRKEID (93 aa)). 2 disulfide bridges follow: Cys53–Cys115 and Cys160–Cys219. N-linked (GlcNAc...) asparagine glycans are attached at residues Asn104 and Asn192. Positions 139–236 (PVTPVCRVPK…SARCEEQEME (98 aa)) constitute an Ig-like C2-type domain. A helical transmembrane segment spans residues 242-262 (IGGIIGGVLVVLAVLALITLG). Topologically, residues 263-310 (ICCAYRRGYFINNKQDGESYKNPGKPDGVNYIRTDEEGDFRHKSSFVI) are cytoplasmic. 2 S-palmitoyl cysteine lipidation sites follow: Cys264 and Cys265.

The protein belongs to the immunoglobulin superfamily. In terms of assembly, interacts with ITGAM. Interacts with GORASP2. Proteolytically cleaved from endothelial cells surface into a soluble form by ADAM10 and ADAM17; the release of soluble JAM3 is increased by pro-inflammatory factors. In terms of processing, S-palmitoylated by ZDHHC7. S-palmitoylation promotes expression at tight junctions. Detected on round and elongated spermatids (at protein level). Highest expression in placenta, brain and kidney. Significant expression is detected on platelets. Expressed in intestinal mucosa cells. Expressed in the vascular endothelium. Found in serum (at protein level). Also detected in the synovial fluid of patients with rheumatoid arthritis, psoriatic arthritis or ostearthritis (at protein level).

It localises to the cell membrane. It is found in the cell junction. Its subcellular location is the desmosome. The protein resides in the tight junction. The protein localises to the secreted. Its function is as follows. Junctional adhesion protein that mediates heterotypic cell-cell interactions with its cognate receptor JAM2 to regulate different cellular processes. Plays a role in homing and mobilization of hematopoietic stem and progenitor cells within the bone marrow. At the surface of bone marrow stromal cells, it contributes to the retention of the hematopoietic stem and progenitor cells expressing JAM3. Plays a central role in leukocytes extravasation by facilitating transmigration through the endothelium. Plays a role in spermatogenesis where JAM2 and JAM3, which are respectively expressed by Sertoli and germ cells, mediate an interaction between both cell types and play an essential role in the anchorage of germ cells onto Sertoli cells and the assembly of cell polarity complexes during spermatid differentiation. Also functions as a counter-receptor for ITGAM, mediating leukocyte-platelet interactions and is involved in the regulation of transepithelial migration of polymorphonuclear neutrophils (PMN). Plays a role in angiogenesis. Plays a role in the regulation of cell migration. During myogenesis, it is involved in myocyte fusion. Functionally, promotes chemotaxis of vascular endothelial cells and stimulates angiogenesis. This Homo sapiens (Human) protein is Junctional adhesion molecule C (JAM3).